The following is a 93-amino-acid chain: Small ribosomal subunit protein uS19c (93 aa).

It belongs to the universal ribosomal protein uS19 family.

It localises to the plastid. Its subcellular location is the chloroplast. Its function is as follows. Protein S19 forms a complex with S13 that binds strongly to the 16S ribosomal RNA. This is Small ribosomal subunit protein uS19c from Zygnema circumcarinatum (Green alga).